The primary structure comprises 341 residues: Phenylalanine--tRNA ligase alpha subunit (341 aa).

Glu256 contributes to the Mg(2+) binding site.

Belongs to the class-II aminoacyl-tRNA synthetase family. Phe-tRNA synthetase alpha subunit type 1 subfamily. As to quaternary structure, tetramer of two alpha and two beta subunits. Mg(2+) serves as cofactor.

It localises to the cytoplasm. The catalysed reaction is tRNA(Phe) + L-phenylalanine + ATP = L-phenylalanyl-tRNA(Phe) + AMP + diphosphate + H(+). This is Phenylalanine--tRNA ligase alpha subunit (pheS) from Chlamydia muridarum (strain MoPn / Nigg).